The primary structure comprises 330 residues: Inactive hydroxysteroid dehydrogenase-like protein 1 (330 aa).

Position 2 is an N-acetylalanine (alanine 2). A required for mitochondria translocation region spans residues 2-82 (AAVDSFYLLY…SGATDGIGKA (81 aa)). NADP(+)-binding positions include 74–80 (GATDGIG), aspartate 125, and lysine 222.

This sequence belongs to the short-chain dehydrogenases/reductases (SDR) family. 17-beta-HSD 3 subfamily. In terms of assembly, interacts with STYXL1.

It is found in the mitochondrion. This is Inactive hydroxysteroid dehydrogenase-like protein 1 (Hsdl1) from Mus musculus (Mouse).